The sequence spans 347 residues: Holliday junction branch migration complex subunit RuvB (347 aa).

Positions 4–186 (INEYGSERIV…FGMIFEMNFY (183 aa)) are large ATPase domain (RuvB-L). ATP-binding positions include Leu-25, Arg-26, Gly-67, Lys-70, Thr-71, Thr-72, 133-135 (EDF), Arg-176, Tyr-186, and Arg-223. Thr-71 contributes to the Mg(2+) binding site. Residues 187–257 (TQEELKMIIT…IVEEVMRLLG (71 aa)) form a small ATPAse domain (RuvB-S) region. The head domain (RuvB-H) stretch occupies residues 260-347 (EFGLDEMDRK…GLFDGFGNIE (88 aa)). Arg-315 and Arg-320 together coordinate DNA.

It belongs to the RuvB family. Homohexamer. Forms an RuvA(8)-RuvB(12)-Holliday junction (HJ) complex. HJ DNA is sandwiched between 2 RuvA tetramers; dsDNA enters through RuvA and exits via RuvB. An RuvB hexamer assembles on each DNA strand where it exits the tetramer. Each RuvB hexamer is contacted by two RuvA subunits (via domain III) on 2 adjacent RuvB subunits; this complex drives branch migration. In the full resolvosome a probable DNA-RuvA(4)-RuvB(12)-RuvC(2) complex forms which resolves the HJ.

It localises to the cytoplasm. It catalyses the reaction ATP + H2O = ADP + phosphate + H(+). The RuvA-RuvB-RuvC complex processes Holliday junction (HJ) DNA during genetic recombination and DNA repair, while the RuvA-RuvB complex plays an important role in the rescue of blocked DNA replication forks via replication fork reversal (RFR). RuvA specifically binds to HJ cruciform DNA, conferring on it an open structure. The RuvB hexamer acts as an ATP-dependent pump, pulling dsDNA into and through the RuvAB complex. RuvB forms 2 homohexamers on either side of HJ DNA bound by 1 or 2 RuvA tetramers; 4 subunits per hexamer contact DNA at a time. Coordinated motions by a converter formed by DNA-disengaged RuvB subunits stimulates ATP hydrolysis and nucleotide exchange. Immobilization of the converter enables RuvB to convert the ATP-contained energy into a lever motion, pulling 2 nucleotides of DNA out of the RuvA tetramer per ATP hydrolyzed, thus driving DNA branch migration. The RuvB motors rotate together with the DNA substrate, which together with the progressing nucleotide cycle form the mechanistic basis for DNA recombination by continuous HJ branch migration. Branch migration allows RuvC to scan DNA until it finds its consensus sequence, where it cleaves and resolves cruciform DNA. This chain is Holliday junction branch migration complex subunit RuvB, found in Fervidobacterium nodosum (strain ATCC 35602 / DSM 5306 / Rt17-B1).